The sequence spans 488 residues: 3-octaprenyl-4-hydroxybenzoate carboxy-lyase (488 aa).

A Mn(2+)-binding site is contributed by Asn-172. Residues 175–177, 189–191, and 194–195 each bind prenylated FMN; these read IYR, RWL, and RG. Glu-238 serves as a coordination point for Mn(2+). Residue Asp-287 is the Proton donor of the active site.

This sequence belongs to the UbiD family. As to quaternary structure, homohexamer. Prenylated FMN serves as cofactor. The cofactor is Mn(2+).

It localises to the cell membrane. The enzyme catalyses a 4-hydroxy-3-(all-trans-polyprenyl)benzoate + H(+) = a 2-(all-trans-polyprenyl)phenol + CO2. Its pathway is cofactor biosynthesis; ubiquinone biosynthesis. Functionally, catalyzes the decarboxylation of 3-octaprenyl-4-hydroxy benzoate to 2-octaprenylphenol, an intermediate step in ubiquinone biosynthesis. This chain is 3-octaprenyl-4-hydroxybenzoate carboxy-lyase, found in Legionella pneumophila subsp. pneumophila (strain Philadelphia 1 / ATCC 33152 / DSM 7513).